The primary structure comprises 163 residues: MAKESSFDIVSKVELPEVQNAIQIALKEISTRYDFKGSKSDISLDKEELVLVSDDEFKLSQLKDVLVSKLIKRNVPTKNIDYGKVENASGGTVRQRAKLVQGIDKDNAKKINTIIKNSGLKVKSQVQDDQVRVTGKNKDDLQQIISAVRGADLPIDVQFINFR.

The protein belongs to the YajQ family.

Its function is as follows. Nucleotide-binding protein. This is Nucleotide-binding protein BSU11020 (yitK) from Bacillus subtilis (strain 168).